The following is a 76-amino-acid chain: uncharacterized protein (76 aa).

This is an uncharacterized protein from Methanocaldococcus jannaschii (strain ATCC 43067 / DSM 2661 / JAL-1 / JCM 10045 / NBRC 100440) (Methanococcus jannaschii).